The chain runs to 197 residues: NADH-quinone oxidoreductase subunit I 2 (197 aa).

2 4Fe-4S ferredoxin-type domains span residues 42–71 (GVIGLFEENCTVCMLCARECPDWCIYIDSH) and 91–120 (DRFAIDFALCMYCGICIEVCPFDALFWSPE). [4Fe-4S] cluster contacts are provided by cysteine 51, cysteine 54, cysteine 57, cysteine 61, cysteine 100, cysteine 103, cysteine 106, and cysteine 110. The disordered stretch occupies residues 147-197 (APPALDPGAEEPKELAAARKAADKLAAQQQPDQPGPDHPGQPDESGQEGRT). Over residues 156-169 (EEPKELAAARKAAD) the composition is skewed to basic and acidic residues.

It belongs to the complex I 23 kDa subunit family. In terms of assembly, NDH-1 is composed of 14 different subunits. Subunits NuoA, H, J, K, L, M, N constitute the membrane sector of the complex. The cofactor is [4Fe-4S] cluster.

Its subcellular location is the cell membrane. The enzyme catalyses a quinone + NADH + 5 H(+)(in) = a quinol + NAD(+) + 4 H(+)(out). In terms of biological role, NDH-1 shuttles electrons from NADH, via FMN and iron-sulfur (Fe-S) centers, to quinones in the respiratory chain. The immediate electron acceptor for the enzyme in this species is believed to be ubiquinone. Couples the redox reaction to proton translocation (for every two electrons transferred, four hydrogen ions are translocated across the cytoplasmic membrane), and thus conserves the redox energy in a proton gradient. The polypeptide is NADH-quinone oxidoreductase subunit I 2 (Streptomyces coelicolor (strain ATCC BAA-471 / A3(2) / M145)).